The sequence spans 76 residues: ATP synthase subunit 9, mitochondrial (76 aa).

2 helical membrane passes run Ile-14–Ile-34 and Ile-52–Leu-72.

This sequence belongs to the ATPase C chain family. In terms of assembly, F-type ATPases have 2 components, CF(1) - the catalytic core - and CF(0) - the membrane proton channel. CF(1) has five subunits: alpha(3), beta(3), gamma(1), delta(1), epsilon(1). CF(0) has three main subunits: a, b and c.

The protein resides in the mitochondrion membrane. Functionally, mitochondrial membrane ATP synthase (F(1)F(0) ATP synthase or Complex V) produces ATP from ADP in the presence of a proton gradient across the membrane which is generated by electron transport complexes of the respiratory chain. F-type ATPases consist of two structural domains, F(1) - containing the extramembraneous catalytic core and F(0) - containing the membrane proton channel, linked together by a central stalk and a peripheral stalk. During catalysis, ATP synthesis in the catalytic domain of F(1) is coupled via a rotary mechanism of the central stalk subunits to proton translocation. Part of the complex F(0) domain. A homomeric c-ring of probably 10 subunits is part of the complex rotary element. The chain is ATP synthase subunit 9, mitochondrial (ATP9) from Wickerhamomyces canadensis (Yeast).